We begin with the raw amino-acid sequence, 365 residues long: tRNA/tmRNA (uracil-C(5))-methyltransferase (365 aa).

The S-adenosyl-L-methionine site is built by Q189, Y217, N222, E238, and D298. Catalysis depends on C323, which acts as the Nucleophile. The Proton acceptor role is filled by E357.

This sequence belongs to the class I-like SAM-binding methyltransferase superfamily. RNA M5U methyltransferase family. TrmA subfamily.

It catalyses the reaction uridine(54) in tRNA + S-adenosyl-L-methionine = 5-methyluridine(54) in tRNA + S-adenosyl-L-homocysteine + H(+). The catalysed reaction is uridine(341) in tmRNA + S-adenosyl-L-methionine = 5-methyluridine(341) in tmRNA + S-adenosyl-L-homocysteine + H(+). In terms of biological role, dual-specificity methyltransferase that catalyzes the formation of 5-methyluridine at position 54 (m5U54) in all tRNAs, and that of position 341 (m5U341) in tmRNA (transfer-mRNA). This is tRNA/tmRNA (uracil-C(5))-methyltransferase from Psychromonas ingrahamii (strain DSM 17664 / CCUG 51855 / 37).